The primary structure comprises 594 residues: MAVEKLITDHIDIWSSALQTRSMAGRGSNGKIDLYGIKKLRELILELAVRGKLVPQDPNDEPASELLKRIAAEKTELVKQGKIKKQKPLLRISEDEKPFELPEGWEWITLSEIATINPKIEVTDDEQEISFVPMPCISTRFDGAHDQEIKKWGEVKKGYTHFADGDIALAKITPCFENSKAVIFKGLKGGVGVGTTELHVARPISSELNLQYILLNIKSPHYLSMGESMMTGSAGQKRVPRSFFENYPIPFPPNTEQARIVGTFSKLMFLCDQLEQQSLTSLDAHQQLVETLLATLTDSQNAEELAENWARISQYFDTLFTTEASIDALKQTILQLAVMGKLVSQDPNDEPASELLKRVEQEKVQLVKEGKIKKQKPLPPVSDDEKPFELPIGWEWCRIGEIIANMDAGWSPACSPEPSPNEDIWGVLKTTAVQSLEYREQENKTLPNSKLPRPQYEVHDGDILVTRAGPKNRVGVSCLVEKTRSKLMISDKIIRFHLISDDISAKYISLCLNRGVTADYLEASKSGMAESQMNISQENLRSAPIALPPTAIQLKVISTIEDFFKVCDQLKSRLQSAQQTQLHLADALTDAALN.

The protein belongs to the type-I restriction system S methylase family. As to quaternary structure, the type I restriction/modification system is composed of three polypeptides R, M and S; the restriction enzyme has stoichiometry R(2)M(2)S(1) while the methyltransferase is M(2)S(1).

Functionally, the specificity (S) subunit of a type I restriction enzyme; this subunit dictates DNA sequence specificity. The M and S subunits together form a methyltransferase (MTase) that methylates two adenine residues of the sequence 5'-GAGN(7)ATGC-3'. In the presence of the R subunit the complex can also act as an endonuclease, binding to the same target sequence but cutting the DNA some distance from this site. Whether the DNA is cut or modified depends on the methylation state of the target sequence. When the target site is unmodified, the DNA is cut. When the target site is hemimethylated, the complex acts as a maintenance MTase modifying the DNA so that both strands become methylated. After locating a non-methylated recognition site, the enzyme complex serves as a molecular motor that translocates DNA in an ATP-dependent manner until a collision occurs that triggers cleavage. This chain is Type I restriction enzyme EcoEI specificity subunit, found in Escherichia coli.